The chain runs to 634 residues: tRNA uridine 5-carboxymethylaminomethyl modification enzyme MnmG (634 aa).

Position 14-19 (G14–G19) interacts with FAD. G279–F293 contacts NAD(+).

This sequence belongs to the MnmG family. As to quaternary structure, homodimer. Heterotetramer of two MnmE and two MnmG subunits. FAD serves as cofactor.

It is found in the cytoplasm. In terms of biological role, NAD-binding protein involved in the addition of a carboxymethylaminomethyl (cmnm) group at the wobble position (U34) of certain tRNAs, forming tRNA-cmnm(5)s(2)U34. The sequence is that of tRNA uridine 5-carboxymethylaminomethyl modification enzyme MnmG from Xanthomonas campestris pv. campestris (strain B100).